Reading from the N-terminus, the 167-residue chain is NAD(P)H-quinone oxidoreductase subunit I, chloroplastic (167 aa).

4Fe-4S ferredoxin-type domains lie at 55–84 (GRIH…VDWK) and 95–124 (LNYS…MTEE). Cys-64, Cys-67, Cys-70, Cys-74, Cys-104, Cys-107, Cys-110, and Cys-114 together coordinate [4Fe-4S] cluster.

This sequence belongs to the complex I 23 kDa subunit family. In terms of assembly, NDH is composed of at least 16 different subunits, 5 of which are encoded in the nucleus. It depends on [4Fe-4S] cluster as a cofactor.

Its subcellular location is the plastid. It localises to the chloroplast thylakoid membrane. It catalyses the reaction a plastoquinone + NADH + (n+1) H(+)(in) = a plastoquinol + NAD(+) + n H(+)(out). It carries out the reaction a plastoquinone + NADPH + (n+1) H(+)(in) = a plastoquinol + NADP(+) + n H(+)(out). NDH shuttles electrons from NAD(P)H:plastoquinone, via FMN and iron-sulfur (Fe-S) centers, to quinones in the photosynthetic chain and possibly in a chloroplast respiratory chain. The immediate electron acceptor for the enzyme in this species is believed to be plastoquinone. Couples the redox reaction to proton translocation, and thus conserves the redox energy in a proton gradient. In Aethionema grandiflorum (Persian stone-cress), this protein is NAD(P)H-quinone oxidoreductase subunit I, chloroplastic.